The following is a 302-amino-acid chain: MSVFIDKNTKVMVQGITGSTALFHTKQMLDYGTKIVAGVTPGKGGQVVEGVPVFNTVEEAKNETGATVSVIYVPAPFAADSILEAADADLDMVICITEHIPVLDMVKVKRYLQGRKTRLVGPNCPGVITADECKIGIMPGYIHKKGHVGVVSRSGTLTYEAVHQLTEEGIGQTTAVGIGGDPVNGTNFIDVLKAFNEDDETKAVVMIGEIGGTAEEEAAEWIKANMTKPVVGFIGGQTAPPGKRMGHAGAIISGGKGTAEEKIKTLNSCGVKTAATPSEIGSTLIEAAKEAGIYELLLTVNK.

Residues 17–20 (TGST), K43, and 96–98 (ITE) contribute to the CoA site. Residue Y159 coordinates substrate. H247 acts as the Tele-phosphohistidine intermediate in catalysis.

It belongs to the succinate/malate CoA ligase alpha subunit family. In terms of assembly, heterotetramer of two alpha and two beta subunits.

The catalysed reaction is succinate + ATP + CoA = succinyl-CoA + ADP + phosphate. It catalyses the reaction GTP + succinate + CoA = succinyl-CoA + GDP + phosphate. The protein operates within carbohydrate metabolism; tricarboxylic acid cycle; succinate from succinyl-CoA (ligase route): step 1/1. Its function is as follows. Succinyl-CoA synthetase functions in the citric acid cycle (TCA), coupling the hydrolysis of succinyl-CoA to the synthesis of either ATP or GTP and thus represents the only step of substrate-level phosphorylation in the TCA. The alpha subunit of the enzyme binds the substrates coenzyme A and phosphate, while succinate binding and nucleotide specificity is provided by the beta subunit. This is Succinate--CoA ligase [ADP-forming] subunit alpha from Staphylococcus aureus (strain MRSA252).